The chain runs to 142 residues: Large ribosomal subunit protein uL11 (142 aa).

This sequence belongs to the universal ribosomal protein uL11 family. Part of the ribosomal stalk of the 50S ribosomal subunit. Interacts with L10 and the large rRNA to form the base of the stalk. L10 forms an elongated spine to which L12 dimers bind in a sequential fashion forming a multimeric L10(L12)X complex. In terms of processing, one or more lysine residues are methylated.

Functionally, forms part of the ribosomal stalk which helps the ribosome interact with GTP-bound translation factors. This chain is Large ribosomal subunit protein uL11, found in Haemophilus ducreyi (strain 35000HP / ATCC 700724).